Consider the following 305-residue polypeptide: Probable pyridoxal 5'-phosphate synthase subunit pdx1 (305 aa).

D33 serves as a coordination point for D-ribose 5-phosphate. The active-site Schiff-base intermediate with D-ribose 5-phosphate is K90. G162 is a binding site for D-ribose 5-phosphate. R174 is a D-glyceraldehyde 3-phosphate binding site. D-ribose 5-phosphate contacts are provided by residues G223 and 244-245; that span reads GS.

It belongs to the PdxS/SNZ family. As to quaternary structure, homohexamer.

It carries out the reaction aldehydo-D-ribose 5-phosphate + D-glyceraldehyde 3-phosphate + L-glutamine = pyridoxal 5'-phosphate + L-glutamate + phosphate + 3 H2O + H(+). It participates in cofactor biosynthesis; pyridoxal 5'-phosphate biosynthesis. Functionally, catalyzes the formation of pyridoxal 5'-phosphate from ribose 5-phosphate (RBP), glyceraldehyde 3-phosphate (G3P) and ammonia. The ammonia is provided by pdx2. Can also use ribulose 5-phosphate and dihydroxyacetone phosphate as substrates, resulting from enzyme-catalyzed isomerization of RBP and G3P, respectively. The sequence is that of Probable pyridoxal 5'-phosphate synthase subunit pdx1 (pdx1) from Dictyostelium discoideum (Social amoeba).